A 168-amino-acid chain; its full sequence is Large ribosomal subunit protein uL10 (168 aa).

Belongs to the universal ribosomal protein uL10 family. Part of the ribosomal stalk of the 50S ribosomal subunit. The N-terminus interacts with L11 and the large rRNA to form the base of the stalk. The C-terminus forms an elongated spine to which L12 dimers bind in a sequential fashion forming a multimeric L10(L12)X complex.

In terms of biological role, forms part of the ribosomal stalk, playing a central role in the interaction of the ribosome with GTP-bound translation factors. In Photorhabdus laumondii subsp. laumondii (strain DSM 15139 / CIP 105565 / TT01) (Photorhabdus luminescens subsp. laumondii), this protein is Large ribosomal subunit protein uL10.